A 731-amino-acid chain; its full sequence is Ubiquitin carboxyl-terminal hydrolase 17 (731 aa).

Zn(2+)-binding residues include Cys57, Cys60, Cys68, Cys71, Cys77, Cys81, His90, and Cys94. The MYND-type zinc-finger motif lies at 57–94 (CAVCLYPTTTRCSQCKSVRYCSSKCQILHWRRGHKEEC). 2 disordered regions span residues 171–219 (YETR…DSAN) and 262–281 (LPSK…SGLK). Polar residues-rich tracts occupy residues 207-219 (GNQN…DSAN) and 265-281 (KANS…SGLK). One can recognise a USP domain in the interval 329–633 (FGLVNLGNSC…GAYMLLYARD (305 aa)). Residue Cys338 is the Nucleophile of the active site. The Proton acceptor role is filled by His592. Residues 637-702 (PVSKNGGRKS…TSSCSTKDSS (66 aa)) form a disordered region. Residues 677–701 (DWSSGSLSSMFSSSDTTSSCSTKDS) show a composition bias toward low complexity.

This sequence belongs to the peptidase C19 family.

The enzyme catalyses Thiol-dependent hydrolysis of ester, thioester, amide, peptide and isopeptide bonds formed by the C-terminal Gly of ubiquitin (a 76-residue protein attached to proteins as an intracellular targeting signal).. In terms of biological role, recognizes and hydrolyzes the peptide bond at the C-terminal Gly of ubiquitin. Involved in the processing of poly-ubiquitin precursors as well as that of ubiquitinated proteins. In Arabidopsis thaliana (Mouse-ear cress), this protein is Ubiquitin carboxyl-terminal hydrolase 17 (UBP17).